Consider the following 354-residue polypeptide: UDP-N-acetylglucosamine--N-acetylmuramyl-(pentapeptide) pyrophosphoryl-undecaprenol N-acetylglucosamine transferase (354 aa).

UDP-N-acetyl-alpha-D-glucosamine contacts are provided by residues 15 to 17 (TGG), asparagine 127, arginine 163, serine 191, isoleucine 244, 263 to 268 (ALTVSE), and glutamine 288.

The protein belongs to the glycosyltransferase 28 family. MurG subfamily.

It is found in the cell inner membrane. It catalyses the reaction di-trans,octa-cis-undecaprenyl diphospho-N-acetyl-alpha-D-muramoyl-L-alanyl-D-glutamyl-meso-2,6-diaminopimeloyl-D-alanyl-D-alanine + UDP-N-acetyl-alpha-D-glucosamine = di-trans,octa-cis-undecaprenyl diphospho-[N-acetyl-alpha-D-glucosaminyl-(1-&gt;4)]-N-acetyl-alpha-D-muramoyl-L-alanyl-D-glutamyl-meso-2,6-diaminopimeloyl-D-alanyl-D-alanine + UDP + H(+). It functions in the pathway cell wall biogenesis; peptidoglycan biosynthesis. In terms of biological role, cell wall formation. Catalyzes the transfer of a GlcNAc subunit on undecaprenyl-pyrophosphoryl-MurNAc-pentapeptide (lipid intermediate I) to form undecaprenyl-pyrophosphoryl-MurNAc-(pentapeptide)GlcNAc (lipid intermediate II). The sequence is that of UDP-N-acetylglucosamine--N-acetylmuramyl-(pentapeptide) pyrophosphoryl-undecaprenol N-acetylglucosamine transferase from Aliivibrio fischeri (strain MJ11) (Vibrio fischeri).